A 183-amino-acid chain; its full sequence is Putative lipoprotein LpqE (183 aa).

The N-terminal stretch at 1–30 (MSRFKISLPALATRVAVLGFLTLMASVLGG) is a signal peptide. A lipid anchor (N-palmitoyl cysteine) is attached at C31. A lipid anchor (S-diacylglycerol cysteine) is attached at C31.

It localises to the cell membrane. The sequence is that of Putative lipoprotein LpqE (lpqE) from Mycobacterium leprae (strain TN).